Consider the following 62-residue polypeptide: Large ribosomal subunit protein bL28 (62 aa).

This sequence belongs to the bacterial ribosomal protein bL28 family.

The chain is Large ribosomal subunit protein bL28 from Thermoanaerobacter pseudethanolicus (strain ATCC 33223 / 39E) (Clostridium thermohydrosulfuricum).